Reading from the N-terminus, the 95-residue chain is RING finger protein Z (95 aa).

Residue G2 is the site of N-myristoyl glycine; by host attachment. The segment at 38 to 74 (CKSCWFANKGLIKCSNHYLCLKCLTAMLSRSDYCGIC) adopts an RING-type; atypical zinc-finger fold. The short motif at 88–91 (PSAP) is the PTAP/PSAP motif element.

Belongs to the arenaviridae Z protein family. Interacts with protein NP; this interaction probably directs the encapsidated genome to budding sites. Interacts (via RING domain) with polymerase L; this interaction inhibits viral transcription and replication, Z partially blocks the product exit tunnel for the releasing nascent RNA product. Interacts with the glycoprotein complex; this interaction plays a role in virion budding. Interacts with host eIF4E; this interaction results in eIF4E reduced affinity for its substrate, the 5'-m7 G cap structure. Interacts (via late-budding domain) with host TSG101; this interaction is essential for budding and release of viral particles. Interacts with host RPLP0; this interaction may serve to load ribosome-like particles inside the virion. Interacts with host PML; this interaction induces PML bodies redistribution in the cytoplasm upon viral infection. In terms of processing, myristoylation is required for the role of RING finger protein Z in assembly and budding.

Its subcellular location is the virion. The protein resides in the host cytoplasm. It localises to the host perinuclear region. It is found in the host cell membrane. In terms of biological role, plays a crucial role in virion assembly and budding. Expressed late in the virus life cycle, it acts as an inhibitor of viral transcription and RNA synthesis by interacting with the viral polymerase L. Presumably recruits the NP encapsidated genome to cellular membranes at budding sites via direct interaction with NP. Plays critical roles in the final steps of viral release by interacting with host TSG101, a member of the vacuolar protein-sorting pathway and using other cellular host proteins involved in vesicle formation pathway. The budding of the virus progeny occurs after association of protein Z with the viral glycoprotein complex SSP-GP1-GP2 at the cell periphery, step that requires myristoylation of protein Z. Also selectively represses protein production by associating with host eIF4E. In cell-based minigenome assay, has an inhibitory effect on the ribonucleoprotein machinery (vRNP), which is responsible for the replication and transcription of the viral genome. This Bear Canyon mammarenavirus (isolate Mouse/United States/AV A0070039/2000) (BCNV) protein is RING finger protein Z.